The following is a 295-amino-acid chain: Deoxyuridine 5'-triphosphate nucleotidohydrolase (295 aa).

Residue 178-180 (RSG) participates in substrate binding. Basic and acidic residues predominate over residues 260 to 272 (NSVRKHTHEDNPV). Residues 260–295 (NSVRKHTHEDNPVHEPNVATASADIRGTKGLGSSGF) are disordered.

This sequence belongs to the dUTPase family. Requires Mg(2+) as cofactor.

It catalyses the reaction dUTP + H2O = dUMP + diphosphate + H(+). Involved in nucleotide metabolism: produces dUMP, the immediate precursor of thymidine nucleotides and decreases the intracellular concentration of dUTP to avoid uracil incorporation into viral DNA. This chain is Deoxyuridine 5'-triphosphate nucleotidohydrolase, found in Human herpesvirus 8 type P (isolate GK18) (HHV-8).